The chain runs to 70 residues: Putative venom toxin Ts29 (70 aa).

Residues 1–20 (MSPLFVVLLIATTTFYHSDA) form the signal peptide.

As to expression, expressed by the venom gland.

Its subcellular location is the secreted. This chain is Putative venom toxin Ts29, found in Tityus serrulatus (Brazilian scorpion).